Consider the following 381-residue polypeptide: Putative steryl acetyl hydrolase mug81 (381 aa).

Residues 1-9 are Cytoplasmic-facing; the sequence is MISLSLLYR. Residues 10-30 form a helical; Signal-anchor for type II membrane protein membrane-spanning segment; it reads ILTLPIILVGTTILYFTIGTN. The Lumenal segment spans residues 31 to 381; it reads FPHDELRHNL…YTFLRETFEE (351 aa). The short motif at 125 to 127 is the Involved in the stabilization of the negatively charged intermediate by the formation of the oxyanion hole element; the sequence is HGG. Asn-193 carries an N-linked (GlcNAc...) asparagine glycan. The active site involves Ser-200.

The protein belongs to the 'GDXG' lipolytic enzyme family.

It is found in the cytoplasm. Its subcellular location is the endoplasmic reticulum membrane. Functionally, required for the deacetylation of acetylated sterols. Has a role in meiosis. The protein is Putative steryl acetyl hydrolase mug81 (mug180) of Schizosaccharomyces pombe (strain 972 / ATCC 24843) (Fission yeast).